The primary structure comprises 128 residues: Large ribosomal subunit protein bL21 (128 aa).

Positions 104-128 (GKKPSVGPRPKRVKAEPAPAADAAE) are disordered. Residues 119-128 (EPAPAADAAE) are compositionally biased toward low complexity.

The protein belongs to the bacterial ribosomal protein bL21 family. In terms of assembly, part of the 50S ribosomal subunit. Contacts protein L20.

This protein binds to 23S rRNA in the presence of protein L20. This Rhodopseudomonas palustris (strain BisB5) protein is Large ribosomal subunit protein bL21.